Here is a 594-residue protein sequence, read N- to C-terminus: MDSSDLDKGLTIDEIIAKCIQSFDKDGKLSDPKLVQMFLMMHPWYIPSGDLAKKLFALSESGDNVERERICQFVRFWISEFPAEFDLNPELGEQIRDLKRALENKGNRRESSLIDIESVPSYGWKRQVTQRGPGGGRVRKTSLLFDHLDPAELAEHLTHLEFHSFSKILFQDYHSFVLHGCTVGNPVLERFIALFNGVSQWIQLMVLSKHTPQQRAAVIKQFVQVAERLLQMQNFNTLMSVVGGLSHSSISRLKDTQSHISPETTKVYDSLLELLTSSDNYARYRRRFATCKGFRFPALGVHLKDLMALHVALPDWADKAKTIINISKMRQVYKVVHELTEAQRLEPPVKANPDLLNLLTVSLDQYRSEEEIYQLSLQREPRARSTQTHAKSPPSPSPPLEEWASLKAKPDQALLCQHIEKMVESVFRLFDEDGDGHISQEEFQSVRSNFPYLCAFNEIDQNQDGKISKQEMTSYFLRASSVLDCKMGFIHNFAERTFLRPVSCQHCRNLILGIYKKGLKCKACGITCHKHCRDHLSIECKKRSKSVSERGESMEKGRHFFFTLPRSFRRSTLYPDLREEEPHMEDDGVFDDHL.

In terms of domain architecture, N-terminal Ras-GEF spans 3 to 121 (SSDLDKGLTI…SLIDIESVPS (119 aa)). The Ras-GEF domain maps to 149–382 (DPAELAEHLT…YQLSLQREPR (234 aa)). The tract at residues 377–403 (LQREPRARSTQTHAKSPPSPSPPLEEW) is disordered. EF-hand domains follow at residues 418–453 (HIEK…FPYL) and 455–482 (AFNE…ASSV). Asp431, Asp433, Asp435, His437, Glu442, Asp460, Asn462, Asp464, Lys466, and Glu471 together coordinate Ca(2+). A Phorbol-ester/DAG-type zinc finger spans residues 490–540 (IHNFAERTFLRPVSCQHCRNLILGIYKKGLKCKACGITCHKHCRDHLSIEC).

The protein belongs to the RASGRP family.

Its subcellular location is the cytoplasm. The protein resides in the cytosol. It is found in the cell membrane. It localises to the synapse. The protein localises to the synaptosome. In terms of biological role, functions as a calcium- and DAG-regulated nucleotide exchange factor specifically activating Rap through the exchange of bound GDP for GTP. May function in cell aggregation and adhesion. This chain is RAS guanyl-releasing protein 2-B (rasgrp2-b), found in Xenopus laevis (African clawed frog).